The following is a 357-amino-acid chain: Glutamine synthetase root isozyme 1 (357 aa).

A GS beta-grasp domain is found at 19-99 (IIAEYIWIGG…VMCDCYTPQG (81 aa)). One can recognise a GS catalytic domain in the interval 106-357 (KRYSAAKVFS…AETTILWNGN (252 aa)).

The protein belongs to the glutamine synthetase family. As to quaternary structure, homooctamer. In terms of tissue distribution, found mainly in the cortical tissues of seedling roots, and in the root tip.

The protein resides in the cytoplasm. It carries out the reaction L-glutamate + NH4(+) + ATP = L-glutamine + ADP + phosphate + H(+). Its function is as follows. Plays a role in the flow of nitrogen into nitrogenous organic compounds. The protein is Glutamine synthetase root isozyme 1 (GLN6) of Zea mays (Maize).